We begin with the raw amino-acid sequence, 375 residues long: Tyrosine--tRNA ligase (375 aa).

Positions 37, 168, 172, 175, and 190 each coordinate L-tyrosine. The short motif at 251 to 255 (KMSKS) is the 'KMSKS' region element. Residue K254 coordinates ATP.

Belongs to the class-I aminoacyl-tRNA synthetase family. TyrS type 4 subfamily. In terms of assembly, homodimer.

The protein resides in the cytoplasm. It catalyses the reaction tRNA(Tyr) + L-tyrosine + ATP = L-tyrosyl-tRNA(Tyr) + AMP + diphosphate + H(+). Catalyzes the attachment of tyrosine to tRNA(Tyr) in a two-step reaction: tyrosine is first activated by ATP to form Tyr-AMP and then transferred to the acceptor end of tRNA(Tyr). This chain is Tyrosine--tRNA ligase, found in Thermococcus onnurineus (strain NA1).